Consider the following 273-residue polypeptide: Large ribosomal subunit protein uL2 (273 aa).

Residues R221–T263 form a disordered region. Basic residues predominate over residues K253–T263.

It belongs to the universal ribosomal protein uL2 family. As to quaternary structure, part of the 50S ribosomal subunit. Forms a bridge to the 30S subunit in the 70S ribosome.

Its function is as follows. One of the primary rRNA binding proteins. Required for association of the 30S and 50S subunits to form the 70S ribosome, for tRNA binding and peptide bond formation. It has been suggested to have peptidyltransferase activity; this is somewhat controversial. Makes several contacts with the 16S rRNA in the 70S ribosome. This is Large ribosomal subunit protein uL2 from Buchnera aphidicola subsp. Baizongia pistaciae (strain Bp).